Consider the following 189-residue polypeptide: Transcription factor FapR (189 aa).

Belongs to the FapR family.

Transcriptional factor involved in regulation of membrane lipid biosynthesis by repressing genes involved in fatty acid and phospholipid metabolism. This chain is Transcription factor FapR, found in Listeria welshimeri serovar 6b (strain ATCC 35897 / DSM 20650 / CCUG 15529 / CIP 8149 / NCTC 11857 / SLCC 5334 / V8).